A 184-amino-acid chain; its full sequence is MAPLLPIRTLPLILILLALLSPGAADFNISSLSGLLSPALTESLLVALPPCHLTGGNATLMVRRANDSKVVTSSFVVPPCRGRRELVSVVDSGAGFTVTRLSAYQVTNLVPGTKFYISYLVKKGTATESSREIPMSTLPRRNMESIGLGMARTGGMVVITVLLSVAMFLLVLGFIIALALGSRK.

An N-terminal signal peptide occupies residues 1–25; that stretch reads MAPLLPIRTLPLILILLALLSPGAA. The propeptide occupies 26–84; the sequence is DFNISSLSGLLSPALTESLLVALPPCHLTGGNATLMVRRANDSKVVTSSFVVPPCRGRR. Asn28, Asn57, and Asn66 each carry an N-linked (GlcNAc...) asparagine glycan. Residues 85-155 lie on the Lumenal side of the membrane; that stretch reads ELVSVVDSGA…IGLGMARTGG (71 aa). The helical transmembrane segment at 156–176 threads the bilayer; it reads MVVITVLLSVAMFLLVLGFII. Over 177–184 the chain is Cytoplasmic; that stretch reads ALALGSRK.

This sequence belongs to the uroplakin-2 family. As to quaternary structure, interacts with uroplakin-1a (UPK1A). Expressed in ureter.

Its subcellular location is the cell membrane. In terms of biological role, component of the asymmetric unit membrane (AUM); a highly specialized biomembrane elaborated by terminally differentiated urothelial cells. May play an important role in regulating the assembly of the AUM. The polypeptide is Uroplakin-2 (UPK2) (Homo sapiens (Human)).